A 277-amino-acid chain; its full sequence is MALKTFNPTTPGQRQLVMVDRSALYKGKPVKALTEGKQSSGGRNNTGRITVRFLGGGHKQSYRTVDFKRDKVDVPATVERLEYDPNRTAFIALVKYQDGELAYILAPQRLAVGDTIVAGNYVDVKPGNVMPLGNMPVGTIVHNIEVKIGKGGQLARSAGTYAQLVGRDHDYVIVRLNSGEQRLVHGRCRGTIGAVSNPDHMNTSIGKAGRKRWMGRRPHNRGVAMNPIDHPHGGGEGRTSGGRHPVTPWGKPTKGKKTRTNKSTDKFILLSRHKRKK.

The interval G222–K277 is disordered.

Belongs to the universal ribosomal protein uL2 family. In terms of assembly, part of the 50S ribosomal subunit. Forms a bridge to the 30S subunit in the 70S ribosome.

One of the primary rRNA binding proteins. Required for association of the 30S and 50S subunits to form the 70S ribosome, for tRNA binding and peptide bond formation. It has been suggested to have peptidyltransferase activity; this is somewhat controversial. Makes several contacts with the 16S rRNA in the 70S ribosome. The protein is Large ribosomal subunit protein uL2 of Bradyrhizobium sp. (strain ORS 278).